We begin with the raw amino-acid sequence, 212 residues long: Large ribosomal subunit protein uL4 (212 aa).

A disordered region spans residues 45–71 (RQGNASTKTRAEVRGGGRKPWRQKGTG). Residues 60-71 (GGRKPWRQKGTG) are compositionally biased toward basic residues.

The protein belongs to the universal ribosomal protein uL4 family. As to quaternary structure, part of the 50S ribosomal subunit.

One of the primary rRNA binding proteins, this protein initially binds near the 5'-end of the 23S rRNA. It is important during the early stages of 50S assembly. It makes multiple contacts with different domains of the 23S rRNA in the assembled 50S subunit and ribosome. In terms of biological role, forms part of the polypeptide exit tunnel. The polypeptide is Large ribosomal subunit protein uL4 (Nostoc punctiforme (strain ATCC 29133 / PCC 73102)).